We begin with the raw amino-acid sequence, 503 residues long: ATP synthase subunit alpha (503 aa).

Residue 169 to 176 coordinates ATP; sequence GDRKTGKT.

The protein belongs to the ATPase alpha/beta chains family. As to quaternary structure, F-type ATPases have 2 components, CF(1) - the catalytic core - and CF(0) - the membrane proton channel. CF(1) has five subunits: alpha(3), beta(3), gamma(1), delta(1), epsilon(1). CF(0) has three main subunits: a(1), b(2) and c(9-12). The alpha and beta chains form an alternating ring which encloses part of the gamma chain. CF(1) is attached to CF(0) by a central stalk formed by the gamma and epsilon chains, while a peripheral stalk is formed by the delta and b chains.

It is found in the cell membrane. The catalysed reaction is ATP + H2O + 4 H(+)(in) = ADP + phosphate + 5 H(+)(out). Its function is as follows. Produces ATP from ADP in the presence of a proton gradient across the membrane. The alpha chain is a regulatory subunit. The protein is ATP synthase subunit alpha of Ligilactobacillus salivarius (strain UCC118) (Lactobacillus salivarius).